The primary structure comprises 1776 residues: 6-methylsalicylic acid synthase (1776 aa).

A compositionally biased stretch (low complexity) spans 1–18 (MHSVSPSTYPSGGTSPAP). Positions 1 to 26 (MHSVSPSTYPSGGTSPAPADTPGTEY) are disordered. The Ketosynthase family 3 (KS3) domain occupies 32-457 (SNDVAVVGMA…GTVSHAVIEE (426 aa)). Residues Cys-204, His-339, and His-379 each act as for beta-ketoacyl synthase activity in the active site. The malonyl-CoA:ACP transacylase (MAT) domain stretch occupies residues 567–880 (VWVFSGHGAQ…IAQLHCRGAE (314 aa)). The segment at 925-1044 (HTLLGQRIPV…AYWDRKVLGS (120 aa)) is N-terminal hotdog fold. The segment at 925–1196 (HTLLGQRIPV…FTAMRFSEIE (272 aa)) is dehydratase (DH) domain. In terms of domain architecture, PKS/mFAS DH spans 925–1201 (HTLLGQRIPV…FSEIEGTPGV (277 aa)). The active-site Proton acceptor; for dehydratase activity is His-957. Residues 1058-1201 (TTKLADNFSI…FSEIEGTPGV (144 aa)) are C-terminal hotdog fold. Catalysis depends on Asp-1113, which acts as the Proton donor; for dehydratase activity. The tract at residues 1205 to 1657 (MESLVHQIAW…LRSLAIDDGE (453 aa)) is product template (PT) domain. Residues 1700–1774 (AYLDEKIRGC…HLVVWFAEKI (75 aa)) enclose the Carrier domain. O-(pantetheine 4'-phosphoryl)serine is present on Ser-1734.

The protein resides in the cytoplasm. Its subcellular location is the cytosol. It catalyses the reaction 3 malonyl-CoA + acetyl-CoA + NADPH + 3 H(+) = 6-methylsalicylate + 3 CO2 + NADP(+) + 4 CoA + H2O. The protein operates within mycotoxin biosynthesis; patulin biosynthesis. Its function is as follows. 6-methylsalicylic acid synthase; part of the gene cluster that mediates the biosynthesis of patulin, an acetate-derived tetraketide mycotoxin produced by several fungal species that shows antimicrobial properties against several bacteria. PatK catalyzes the first step of the pathway which is the synthesis of 6-methylsalicylic acid via condensation of 1 acetate and 3 malonate units. The pathway begins with the synthesis of 6-methylsalicylic acid by the polyketide synthase (PKS) patK via condensation of acetate and malonate units. The 6-methylsalicylic acid decarboxylase patG then catalyzes the decarboxylation of 6-methylsalicylic acid to yield m-cresol (also known as 3-methylphenol). These first reactions occur in the cytosol. The intermediate m-cresol is then transported into the endoplasmic reticulum where the cytochrome P450 monooxygenase patH converts it to m-hydroxybenzyl alcohol, which is further converted to gentisyl alcohol by the cytochrome P450 monooxygenase patI. The oxidoreductases patJ and patO further convert gentisyl alcohol to isoepoxydon in the vacuole. PatN catalyzes then the transformation of isoepoxydon into phyllostine. The cluster protein patF is responsible for the conversion from phyllostine to neopatulin whereas the alcohol dehydrogenase patD converts neopatulin to E-ascladiol. The steps between isoepoxydon and E-ascladiol occur in the cytosol, and E-ascladiol is probably secreted to the extracellular space by one of the cluster-specific transporters patC or patM. Finally, the secreted patulin synthase patE catalyzes the conversion of E-ascladiol to patulin. In Penicillium expansum (Blue mold rot fungus), this protein is 6-methylsalicylic acid synthase.